The following is a 439-amino-acid chain: Probable tRNA pseudouridine synthase D (439 aa).

Asp-87 functions as the Nucleophile in the catalytic mechanism. Residues 166-391 (GVPNFFGIQR…SKGLRREILL (226 aa)) form the TRUD domain.

It belongs to the pseudouridine synthase TruD family.

It carries out the reaction uridine(13) in tRNA = pseudouridine(13) in tRNA. Its function is as follows. Could be responsible for synthesis of pseudouridine from uracil-13 in transfer RNAs. The chain is Probable tRNA pseudouridine synthase D from Methanococcoides burtonii (strain DSM 6242 / NBRC 107633 / OCM 468 / ACE-M).